Here is a 362-residue protein sequence, read N- to C-terminus: Mannan endo-1,4-beta-mannosidase (362 aa).

An N-terminal signal peptide occupies residues 1-26 (MFKKHTISLLIIFLLASAVLAKPIEA). Residues 38-349 (QTTKTVMNWL…YHDSWTLNKG (312 aa)) enclose the GH26 domain. His-131 is a substrate binding site. Residue Glu-193 is the Proton donor of the active site. Residues Trp-198 and Tyr-268 each contribute to the substrate site. Residue Glu-292 is the Nucleophile of the active site. 324–325 (WN) is a binding site for substrate.

The protein belongs to the glycosyl hydrolase 26 family. Homodimer.

The protein resides in the secreted. It catalyses the reaction Random hydrolysis of (1-&gt;4)-beta-D-mannosidic linkages in mannans, galactomannans and glucomannans.. In terms of biological role, involved in the degradation of glucomannan. Catalyzes the endo hydrolysis of beta-1,4-linked mannan, galactomannan and glucomannan. The protein is Mannan endo-1,4-beta-mannosidase of Bacillus subtilis (strain 168).